The primary structure comprises 127 residues: Large ribosomal subunit protein bL19 (127 aa).

This sequence belongs to the bacterial ribosomal protein bL19 family.

In terms of biological role, this protein is located at the 30S-50S ribosomal subunit interface and may play a role in the structure and function of the aminoacyl-tRNA binding site. The protein is Large ribosomal subunit protein bL19 of Synechococcus sp. (strain JA-3-3Ab) (Cyanobacteria bacterium Yellowstone A-Prime).